We begin with the raw amino-acid sequence, 64 residues long: DNA-directed RNA polymerase subunit omega (64 aa).

This sequence belongs to the RNA polymerase subunit omega family. The RNAP catalytic core consists of 2 alpha, 1 beta, 1 beta' and 1 omega subunit. When a sigma factor is associated with the core the holoenzyme is formed, which can initiate transcription.

The enzyme catalyses RNA(n) + a ribonucleoside 5'-triphosphate = RNA(n+1) + diphosphate. Its function is as follows. Promotes RNA polymerase assembly. Latches the N- and C-terminal regions of the beta' subunit thereby facilitating its interaction with the beta and alpha subunits. The sequence is that of DNA-directed RNA polymerase subunit omega from Oceanobacillus iheyensis (strain DSM 14371 / CIP 107618 / JCM 11309 / KCTC 3954 / HTE831).